Consider the following 414-residue polypeptide: Enolase (414 aa).

Q162 is a binding site for (2R)-2-phosphoglycerate. Catalysis depends on E204, which acts as the Proton donor. Residues D239, E280, and D307 each coordinate Mg(2+). Residues K332, R361, S362, and K383 each contribute to the (2R)-2-phosphoglycerate site. The Proton acceptor role is filled by K332.

This sequence belongs to the enolase family. It depends on Mg(2+) as a cofactor.

The protein localises to the cytoplasm. The protein resides in the secreted. Its subcellular location is the cell surface. It catalyses the reaction (2R)-2-phosphoglycerate = phosphoenolpyruvate + H2O. The protein operates within carbohydrate degradation; glycolysis; pyruvate from D-glyceraldehyde 3-phosphate: step 4/5. Catalyzes the reversible conversion of 2-phosphoglycerate (2-PG) into phosphoenolpyruvate (PEP). It is essential for the degradation of carbohydrates via glycolysis. This is Enolase from Campylobacter jejuni subsp. jejuni serotype O:6 (strain 81116 / NCTC 11828).